Here is a 126-residue protein sequence, read N- to C-terminus: Small ribosomal subunit protein bS6 (126 aa).

The interval 101–126 (VMMKAKEERSAKREDAAPRAEEAAAE) is disordered. Residues 104 to 126 (KAKEERSAKREDAAPRAEEAAAE) show a composition bias toward basic and acidic residues.

It belongs to the bacterial ribosomal protein bS6 family.

Functionally, binds together with bS18 to 16S ribosomal RNA. The chain is Small ribosomal subunit protein bS6 from Aliivibrio fischeri (strain ATCC 700601 / ES114) (Vibrio fischeri).